The following is a 398-amino-acid chain: Dihydrolipoyllysine-residue acetyltransferase component of acetoin cleaving system (398 aa).

The Lipoyl-binding domain occupies 2 to 77 (AVKVVMPKLG…PPGTAICYIG (76 aa)). Position 43 is an N6-lipoyllysine (Lys43). The Peripheral subunit-binding (PSBD) domain occupies 118 to 155 (KISPVARKIAEKAGLDLKQLKGTGPGGRIVKDDVTKAL). Catalysis depends on residues His371 and Asp375.

This sequence belongs to the 2-oxoacid dehydrogenase family. (R)-lipoate serves as cofactor.

The catalysed reaction is N(6)-[(R)-dihydrolipoyl]-L-lysyl-[protein] + acetyl-CoA = N(6)-[(R)-S(8)-acetyldihydrolipoyl]-L-lysyl-[protein] + CoA. It functions in the pathway ketone degradation; acetoin degradation. This is Dihydrolipoyllysine-residue acetyltransferase component of acetoin cleaving system (acoC) from Bacillus subtilis (strain 168).